The primary structure comprises 423 residues: Cyclin-dependent kinase 14 (423 aa).

Residues 62 to 85 (VGKESPKVRRHSSPSSPTSPKFGK) form a disordered region. A Protein kinase domain is found at 89–373 (YEKLEKLGEG…AQAALNHDYF (285 aa)). ATP-binding positions include 95 to 103 (LGEGSYATV) and K118. D210 acts as the Proton acceptor in catalysis.

It belongs to the protein kinase superfamily. CMGC Ser/Thr protein kinase family. CDC2/CDKX subfamily. As to quaternary structure, interacts with ccny; ccny mediates its recruitment to the plasma membrane and promotes phosphorylation of lrp6.

The protein localises to the cell membrane. It carries out the reaction L-seryl-[protein] + ATP = O-phospho-L-seryl-[protein] + ADP + H(+). The enzyme catalyses L-threonyl-[protein] + ATP = O-phospho-L-threonyl-[protein] + ADP + H(+). Serine/threonine-protein kinase involved in the control of the eukaryotic cell cycle, whose activity is controlled by an associated cyclin. Acts as a cell-cycle regulator of Wnt signaling pathway during G2/M phase by mediating the phosphorylation of lrp6, leading to the activation of the Wnt signaling pathway. The sequence is that of Cyclin-dependent kinase 14 (cdk14) from Xenopus tropicalis (Western clawed frog).